Reading from the N-terminus, the 217-residue chain is Probable transaldolase (217 aa).

The Schiff-base intermediate with substrate role is filled by lysine 83.

The protein belongs to the transaldolase family. Type 3B subfamily.

The protein localises to the cytoplasm. The catalysed reaction is D-sedoheptulose 7-phosphate + D-glyceraldehyde 3-phosphate = D-erythrose 4-phosphate + beta-D-fructose 6-phosphate. Its pathway is carbohydrate degradation; pentose phosphate pathway; D-glyceraldehyde 3-phosphate and beta-D-fructose 6-phosphate from D-ribose 5-phosphate and D-xylulose 5-phosphate (non-oxidative stage): step 2/3. Transaldolase is important for the balance of metabolites in the pentose-phosphate pathway. This chain is Probable transaldolase, found in Clostridium botulinum (strain Loch Maree / Type A3).